The sequence spans 813 residues: Fibroblast growth factor receptor 2 (813 aa).

An N-terminal signal peptide occupies residues 1–14; the sequence is MLLLALLAFLLVSR. Residues 18–367 lie on the Extracellular side of the membrane; that stretch reads RPSYSMVDDT…EDNPVPYYME (350 aa). The region spanning 21–117 is the Ig-like C2-type 1 domain; that stretch reads YSMVDDTTPE…NSHFFHVNVT (97 aa). Cys58 and Cys103 form a disulfide bridge. Asn79 and Asn115 each carry an N-linked (GlcNAc...) asparagine glycan. Positions 119 to 143 are disordered; it reads ASSSGDDEDDNDGSEDFTNDNNNIR. Residues 123–136 show a composition bias toward acidic residues; it reads GDDEDDNDGSEDFT. 2 Ig-like C2-type domains span residues 145 to 237 and 246 to 348; these read PYWT…YHLD and PILQ…AWLT. The interval 152–169 is heparin-binding; it reads KMEKKLHAVSAANTVKLR. The cysteines at positions 170 and 221 are disulfide-linked. N-linked (GlcNAc...) asparagine glycosylation is found at Asn231, Asn255, Asn287, Asn308, and Asn321. Cysteines 268 and 332 form a disulfide. Residues 368-388 traverse the membrane as a helical segment; sequence IGIYSTGIFIIFCMVVVCVVC. Topologically, residues 389 to 813 are cytoplasmic; sequence RMRQGAKKKK…FQHVNGVVKT (425 aa). Position 456 is a phosphotyrosine; by autocatalysis (Tyr456). One can recognise a Protein kinase domain in the interval 471 to 760; it reads LTLGKPLGEG…LTLTTNEEYL (290 aa). ATP is bound by residues 477–485, Lys507, 555–557, and Asn561; these read LGEGCFGQV and EYA. Residue Tyr576 is modified to Phosphotyrosine; by autocatalysis. Catalysis depends on Asp616, which acts as the Proton acceptor. Tyr646, Tyr647, and Tyr759 each carry phosphotyrosine; by autocatalysis. Residues 771–792 are compositionally biased toward low complexity; it reads PSFPDSSCSASSSSGDDSVFSP. The tract at residues 771-801 is disordered; that stretch reads PSFPDSSCSASSSSGDDSVFSPDPMPHDPCL.

It belongs to the protein kinase superfamily. Tyr protein kinase family. Fibroblast growth factor receptor subfamily. Monomer. Homodimer after ligand binding. Post-translationally, autophosphorylated. Binding of FGF family members together with heparan sulfate proteoglycan or heparin promotes receptor dimerization and autophosphorylation on tyrosine residues. Autophosphorylation occurs in trans between the two FGFR molecules present in the dimer. N-glycosylated in the endoplasmic reticulum. The N-glycan chains undergo further maturation to an Endo H-resistant form in the Golgi apparatus. In terms of processing, ubiquitinated. FGFR2 is rapidly ubiquitinated after autophosphorylation, leading to internalization and degradation. Subject to degradation both in lysosomes and by the proteasome. Expressed in the anterior neural plate in early neurula stage embryos. Later in development, the protein is also expressed in the eye anlagen, midbrain-hindbrain boundary and otic vesicle.

Its subcellular location is the cell membrane. It is found in the golgi apparatus. The protein localises to the cytoplasmic vesicle. It carries out the reaction L-tyrosyl-[protein] + ATP = O-phospho-L-tyrosyl-[protein] + ADP + H(+). Its activity is regulated as follows. Present in an inactive conformation in the absence of bound ligand. Ligand binding leads to dimerization and activation by autophosphorylation on tyrosine residues. Functionally, tyrosine-protein kinase that acts as a cell-surface receptor for fibroblast growth factors and plays an essential role in the regulation of cell proliferation, differentiation, migration and apoptosis, and in the regulation of embryonic development. Required for normal embryonic patterning, limb bud development, lung morphogenesis, osteogenesis and skin development. Plays an essential role in the regulation of osteoblast differentiation, proliferation and apoptosis, and is required for normal skeleton development. Promotes cell proliferation in keratinocytes and immature osteoblasts, but promotes apoptosis in differentiated osteoblasts. Phosphorylates PLCG1, FRS2 and PAK4. Ligand binding leads to the activation of several signaling cascades. Activation of PLCG1 leads to the production of the cellular signaling molecules diacylglycerol and inositol 1,4,5-trisphosphate. Phosphorylation of FRS2 triggers recruitment of GRB2, GAB1, PIK3R1 and SOS1, and mediates activation of RAS, MAPK1/ERK2, MAPK3/ERK1 and the MAP kinase signaling pathway, as well as of the AKT1 signaling pathway. FGFR2 signaling is down-regulated by ubiquitination, internalization and degradation. Mutations that lead to constitutive kinase activation or impair normal FGFR2 maturation, internalization and degradation lead to aberrant signaling. Over-expressed FGFR2 promotes activation of STAT1. The sequence is that of Fibroblast growth factor receptor 2 (fgfr2) from Xenopus laevis (African clawed frog).